Reading from the N-terminus, the 248-residue chain is tRNA (guanine-N(1)-)-methyltransferase (248 aa).

Residues G113 and 133–138 (IGDYVL) each bind S-adenosyl-L-methionine.

The protein belongs to the RNA methyltransferase TrmD family. In terms of assembly, homodimer.

The protein resides in the cytoplasm. The catalysed reaction is guanosine(37) in tRNA + S-adenosyl-L-methionine = N(1)-methylguanosine(37) in tRNA + S-adenosyl-L-homocysteine + H(+). In terms of biological role, specifically methylates guanosine-37 in various tRNAs. The polypeptide is tRNA (guanine-N(1)-)-methyltransferase (Shewanella woodyi (strain ATCC 51908 / MS32)).